Reading from the N-terminus, the 318-residue chain is Ribosomal protein L11 methyltransferase (318 aa).

S-adenosyl-L-methionine-binding residues include threonine 159, glycine 180, aspartate 202, and asparagine 253.

Belongs to the methyltransferase superfamily. PrmA family.

The protein localises to the cytoplasm. It catalyses the reaction L-lysyl-[protein] + 3 S-adenosyl-L-methionine = N(6),N(6),N(6)-trimethyl-L-lysyl-[protein] + 3 S-adenosyl-L-homocysteine + 3 H(+). In terms of biological role, methylates ribosomal protein L11. In Lachnospira eligens (strain ATCC 27750 / DSM 3376 / VPI C15-48 / C15-B4) (Eubacterium eligens), this protein is Ribosomal protein L11 methyltransferase.